The following is a 92-amino-acid chain: Small ribosomal subunit protein uS19c (92 aa).

This sequence belongs to the universal ribosomal protein uS19 family.

The protein localises to the plastid. The protein resides in the chloroplast. Functionally, protein S19 forms a complex with S13 that binds strongly to the 16S ribosomal RNA. The polypeptide is Small ribosomal subunit protein uS19c (Nephroselmis olivacea (Green alga)).